The following is a 322-amino-acid chain: Tetrahydromethanopterin S-methyltransferase subunit H (322 aa).

The protein belongs to the MtrH family. The complex is composed of 8 subunits; MtrA, MtrB, MtrC, MtrD, MtrE, MtrF, MtrG and MtrH.

The enzyme catalyses 5-methyl-5,6,7,8-tetrahydromethanopterin + coenzyme M + 2 Na(+)(in) = 5,6,7,8-tetrahydromethanopterin + methyl-coenzyme M + 2 Na(+)(out). It participates in one-carbon metabolism; methanogenesis from CO(2); methyl-coenzyme M from 5,10-methylene-5,6,7,8-tetrahydromethanopterin: step 2/2. Its function is as follows. Part of a complex that catalyzes the formation of methyl-coenzyme M and tetrahydromethanopterin from coenzyme M and methyl-tetrahydromethanopterin. This is an energy-conserving, sodium-ion translocating step. MtrH catalyzes the transfer of the methyl group from methyl-tetrahydromethanopterin to the corrinoid prosthetic group of MtrA. The polypeptide is Tetrahydromethanopterin S-methyltransferase subunit H (Methanopyrus kandleri (strain AV19 / DSM 6324 / JCM 9639 / NBRC 100938)).